Here is a 22-residue protein sequence, read N- to C-terminus: FLGSIIGALAKGLPSLIALIKK.

Lys-22 bears the Lysine amide mark.

Expressed by the skin glands.

It localises to the secreted. Antimicrobial peptide. The protein is Brevinin-1OKd of Nidirana okinavana (Kampira Falls frog).